The sequence spans 456 residues: tRNA(Ile)-lysidine synthase (456 aa).

28–33 (SGGSDS) is a binding site for ATP.

This sequence belongs to the tRNA(Ile)-lysidine synthase family.

Its subcellular location is the cytoplasm. The catalysed reaction is cytidine(34) in tRNA(Ile2) + L-lysine + ATP = lysidine(34) in tRNA(Ile2) + AMP + diphosphate + H(+). Its function is as follows. Ligates lysine onto the cytidine present at position 34 of the AUA codon-specific tRNA(Ile) that contains the anticodon CAU, in an ATP-dependent manner. Cytidine is converted to lysidine, thus changing the amino acid specificity of the tRNA from methionine to isoleucine. This is tRNA(Ile)-lysidine synthase from Brucella anthropi (strain ATCC 49188 / DSM 6882 / CCUG 24695 / JCM 21032 / LMG 3331 / NBRC 15819 / NCTC 12168 / Alc 37) (Ochrobactrum anthropi).